The following is a 501-amino-acid chain: Cytochrome P450 90A4 (501 aa).

The chain crosses the membrane as a helical span at residues 2 to 22; that stretch reads AAAALLLLAAAAAAVVVAMAL. Residue Cys-446 coordinates heme.

Belongs to the cytochrome P450 family. Heme serves as cofactor.

It is found in the membrane. It participates in plant hormone biosynthesis; brassinosteroid biosynthesis. Functionally, catalyzes the C23-alpha-hydroxylation step in brassinosteroid biosynthesis. Converts 6-deoxocathasterone to 6-deoxoteasterone in the late C6-oxidation pathway and cathasterone to teasterone (TE) in the early C6-oxidation pathway of brassinolide (BL) biosynthesis. This Oryza sativa subsp. indica (Rice) protein is Cytochrome P450 90A4.